Consider the following 311-residue polypeptide: Bifunctional protein FolD (311 aa).

Position 174–176 (174–176) interacts with NADP(+); it reads GKG.

Belongs to the tetrahydrofolate dehydrogenase/cyclohydrolase family. In terms of assembly, homodimer.

The catalysed reaction is (6R)-5,10-methylene-5,6,7,8-tetrahydrofolate + NADP(+) = (6R)-5,10-methenyltetrahydrofolate + NADPH. The enzyme catalyses (6R)-5,10-methenyltetrahydrofolate + H2O = (6R)-10-formyltetrahydrofolate + H(+). It participates in one-carbon metabolism; tetrahydrofolate interconversion. In terms of biological role, catalyzes the oxidation of 5,10-methylenetetrahydrofolate to 5,10-methenyltetrahydrofolate and then the hydrolysis of 5,10-methenyltetrahydrofolate to 10-formyltetrahydrofolate. The sequence is that of Bifunctional protein FolD from Pyrobaculum islandicum (strain DSM 4184 / JCM 9189 / GEO3).